We begin with the raw amino-acid sequence, 257 residues long: 1-(5-phosphoribosyl)-5-[(5-phosphoribosylamino)methylideneamino] imidazole-4-carboxamide isomerase (257 aa).

The protein belongs to the HisA/HisF family.

It localises to the cytoplasm. The enzyme catalyses 1-(5-phospho-beta-D-ribosyl)-5-[(5-phospho-beta-D-ribosylamino)methylideneamino]imidazole-4-carboxamide = 5-[(5-phospho-1-deoxy-D-ribulos-1-ylimino)methylamino]-1-(5-phospho-beta-D-ribosyl)imidazole-4-carboxamide. Its pathway is amino-acid biosynthesis; L-histidine biosynthesis; L-histidine from 5-phospho-alpha-D-ribose 1-diphosphate: step 4/9. The protein is 1-(5-phosphoribosyl)-5-[(5-phosphoribosylamino)methylideneamino] imidazole-4-carboxamide isomerase (his-7) of Neurospora crassa (strain ATCC 24698 / 74-OR23-1A / CBS 708.71 / DSM 1257 / FGSC 987).